The chain runs to 290 residues: 33 kDa chaperonin (290 aa).

2 disulfide bridges follow: Cys-235–Cys-237 and Cys-268–Cys-271.

The protein belongs to the HSP33 family. Post-translationally, under oxidizing conditions two disulfide bonds are formed involving the reactive cysteines. Under reducing conditions zinc is bound to the reactive cysteines and the protein is inactive.

The protein resides in the cytoplasm. Redox regulated molecular chaperone. Protects both thermally unfolding and oxidatively damaged proteins from irreversible aggregation. Plays an important role in the bacterial defense system toward oxidative stress. In Streptococcus pneumoniae serotype 19F (strain G54), this protein is 33 kDa chaperonin.